The chain runs to 279 residues: Phosphatidylglycerol--prolipoprotein diacylglyceryl transferase (279 aa).

3 consecutive transmembrane segments (helical) span residues 18-38 (LSVR…YFVA), 55-75 (IIFY…VIFQ), and 89-109 (IWHG…AGVI). An a 1,2-diacyl-sn-glycero-3-phospho-(1'-sn-glycerol)-binding site is contributed by Arg137. 2 helical membrane passes run 203–223 (LGET…FIEG) and 235–255 (IRVA…LIVY).

Belongs to the Lgt family.

It localises to the cell membrane. It carries out the reaction L-cysteinyl-[prolipoprotein] + a 1,2-diacyl-sn-glycero-3-phospho-(1'-sn-glycerol) = an S-1,2-diacyl-sn-glyceryl-L-cysteinyl-[prolipoprotein] + sn-glycerol 1-phosphate + H(+). The protein operates within protein modification; lipoprotein biosynthesis (diacylglyceryl transfer). In terms of biological role, catalyzes the transfer of the diacylglyceryl group from phosphatidylglycerol to the sulfhydryl group of the N-terminal cysteine of a prolipoprotein, the first step in the formation of mature lipoproteins. This is Phosphatidylglycerol--prolipoprotein diacylglyceryl transferase from Staphylococcus aureus (strain MSSA476).